We begin with the raw amino-acid sequence, 483 residues long: Cytochrome P450 71A23 (483 aa).

The chain crosses the membrane as a helical span at residues methionine 1–histidine 21. Cysteine 429 is a heme binding site.

It belongs to the cytochrome P450 family. It depends on heme as a cofactor.

The protein localises to the membrane. The chain is Cytochrome P450 71A23 (CYP71A23) from Arabidopsis thaliana (Mouse-ear cress).